The primary structure comprises 370 residues: 1-propanol dehydrogenase PduQ (370 aa).

This sequence belongs to the iron-containing alcohol dehydrogenase family. In terms of assembly, interacts with PduP, probably via the N-terminus of PduQ. Requires Fe cation as cofactor.

The protein localises to the bacterial microcompartment. It carries out the reaction 1-propanol + NAD(+) = propanal + NADH + H(+). It participates in polyol metabolism; 1,2-propanediol degradation. With respect to regulation, enzyme is oxygen sensitive. In terms of biological role, an iron-dependent alcohol dehydrogenase required for optimal 1,2-propanediol (1,2-PD) degradation. NAD(+) and NADH are regenerated internally within the bacterial microcompartment (BMC) dedicated to 1,2-PD degradation by the PduP and PduQ enzymes, which reduce NAD(+) and oxidize NADH respectively, although there must also be cofactor transport across the BMC. The 1,2-PD-specific bacterial microcompartment (BMC) concentrates low levels of 1,2-PD catabolic enzymes, concentrates volatile reaction intermediates thus enhancing pathway flux and keeps the level of toxic, mutagenic propionaldehyde low. This chain is 1-propanol dehydrogenase PduQ, found in Salmonella typhimurium (strain LT2 / SGSC1412 / ATCC 700720).